Here is a 123-residue protein sequence, read N- to C-terminus: Large ribosomal subunit protein uL29y (123 aa).

It belongs to the universal ribosomal protein uL29 family.

The polypeptide is Large ribosomal subunit protein uL29y (RPL35B) (Arabidopsis thaliana (Mouse-ear cress)).